Here is a 419-residue protein sequence, read N- to C-terminus: Inositol-tetrakisphosphate 1-kinase (419 aa).

K18 serves as a coordination point for 1D-myo-inositol 1,3,4-trisphosphate. The ATP site is built by R106 and K157. Residues E117 to A334 enclose the ATP-grasp domain. 1D-myo-inositol 1,3,4-trisphosphate-binding residues include H167 and K199. ATP contacts are provided by residues Q188–K199, S214, S232, and S236. 3 residues coordinate Mg(2+): D281, D295, and N297. Position 297 (N297) interacts with 1D-myo-inositol 1,3,4-trisphosphate. K388 bears the N6-acetyllysine; by EP300 and CREBBP mark. S401 carries the post-translational modification Phosphoserine. K415 is modified (N6-acetyllysine; by EP300 and CREBBP).

It belongs to the ITPK1 family. Monomer. Interacts with GPS1/COPS1. Requires Mg(2+) as cofactor. In terms of processing, acetylation by EP300 and CREBBP destabilizes ITPK1, and down-regulates enzymatic activity. Deacetylated by SIRT1.

The catalysed reaction is 1D-myo-inositol 3,4,5,6-tetrakisphosphate + ATP = 1D-myo-inositol 1,3,4,5,6-pentakisphosphate + ADP + H(+). It catalyses the reaction 1D-myo-inositol 1,3,4-trisphosphate + ATP = 1D-myo-inositol 1,3,4,5-tetrakisphosphate + ADP + H(+). The enzyme catalyses 1D-myo-inositol 1,3,4-trisphosphate + ATP = 1D-myo-inositol 1,3,4,6-tetrakisphosphate + ADP + H(+). It carries out the reaction 1D-myo-inositol 3,4,6-trisphosphate + ATP = 1D-myo-inositol 1,3,4,6-tetrakisphosphate + ADP + H(+). The catalysed reaction is 1D-myo-inositol 1,3,4-trisphosphate + 1D-myo-inositol 1,3,4,5,6-pentakisphosphate = 1D-myo-inositol 3,4,5,6-tetrakisphosphate + 1D-myo-inositol 1,3,4,6-tetrakisphosphate. It catalyses the reaction 1D-myo-inositol 1,3,4-trisphosphate + 1D-myo-inositol 1,3,4,5,6-pentakisphosphate = 1D-myo-inositol 3,4,5,6-tetrakisphosphate + 1D-myo-inositol 1,3,4,5-tetrakisphosphate. Kinase that can phosphorylate various inositol polyphosphate such as Ins(3,4,5,6)P4 or Ins(1,3,4)P3. Phosphorylates Ins(3,4,5,6)P4 at position 1 to form Ins(1,3,4,5,6)P5. This reaction is thought to have regulatory importance, since Ins(3,4,5,6)P4 is an inhibitor of plasma membrane Ca(2+)-activated Cl(-) channels, while Ins(1,3,4,5,6)P5 is not. Also phosphorylates Ins(1,3,4)P3 on O-5 and O-6 to form Ins(1,3,4,6)P4, an essential molecule in the hexakisphosphate (InsP6) pathway. Also acts as an inositol polyphosphate phosphatase that dephosphorylates Ins(1,3,4,5)P4 and Ins(1,3,4,6)P4 to Ins(1,3,4)P3, and Ins(1,3,4,5,6)P5 to Ins(3,4,5,6)P4. May also act as an isomerase that interconverts the inositol tetrakisphosphate isomers Ins(1,3,4,5)P4 and Ins(1,3,4,6)P4 in the presence of ADP and magnesium. Probably acts as the rate-limiting enzyme of the InsP6 pathway. Modifies TNF-alpha-induced apoptosis by interfering with the activation of TNFRSF1A-associated death domain. Plays an important role in MLKL-mediated necroptosis. Produces highly phosphorylated inositol phosphates such as inositolhexakisphosphate (InsP6) which bind to MLKL mediating the release of an N-terminal auto-inhibitory region leading to its activation. Essential for activated phospho-MLKL to oligomerize and localize to the cell membrane during necroptosis. The polypeptide is Inositol-tetrakisphosphate 1-kinase (Mus musculus (Mouse)).